Consider the following 322-residue polypeptide: Lipoyl synthase (322 aa).

Basic and acidic residues predominate over residues M1–D25. The tract at residues M1 to Q29 is disordered. 7 residues coordinate [4Fe-4S] cluster: C61, C66, C72, C87, C91, C94, and S300. One can recognise a Radical SAM core domain in the interval W73–L289.

The protein belongs to the radical SAM superfamily. Lipoyl synthase family. It depends on [4Fe-4S] cluster as a cofactor.

The protein resides in the cytoplasm. It carries out the reaction [[Fe-S] cluster scaffold protein carrying a second [4Fe-4S](2+) cluster] + N(6)-octanoyl-L-lysyl-[protein] + 2 oxidized [2Fe-2S]-[ferredoxin] + 2 S-adenosyl-L-methionine + 4 H(+) = [[Fe-S] cluster scaffold protein] + N(6)-[(R)-dihydrolipoyl]-L-lysyl-[protein] + 4 Fe(3+) + 2 hydrogen sulfide + 2 5'-deoxyadenosine + 2 L-methionine + 2 reduced [2Fe-2S]-[ferredoxin]. Its pathway is protein modification; protein lipoylation via endogenous pathway; protein N(6)-(lipoyl)lysine from octanoyl-[acyl-carrier-protein]: step 2/2. Its function is as follows. Catalyzes the radical-mediated insertion of two sulfur atoms into the C-6 and C-8 positions of the octanoyl moiety bound to the lipoyl domains of lipoate-dependent enzymes, thereby converting the octanoylated domains into lipoylated derivatives. The sequence is that of Lipoyl synthase from Gluconobacter oxydans (strain 621H) (Gluconobacter suboxydans).